Reading from the N-terminus, the 461-residue chain is CASP-like protein 4U1 (461 aa).

The tract at residues methionine 1–serine 239 is disordered. Topologically, residues methionine 1–glutamate 314 are cytoplasmic. Over residues threonine 7 to proline 69 the composition is skewed to pro residues. Low complexity-rich tracts occupy residues leucine 116–leucine 126 and threonine 135–glycine 155. Over residues serine 193–leucine 204 the composition is skewed to pro residues. Residues threonine 205–asparagine 221 are compositionally biased toward low complexity. The helical transmembrane segment at leucine 315–alanine 335 threads the bilayer. Residues serine 336–arginine 354 are Extracellular-facing. The chain crosses the membrane as a helical span at residues tyrosine 355–isoleucine 375. The Cytoplasmic segment spans residues arginine 376–tyrosine 392. The helical transmembrane segment at cysteine 393–alanine 413 threads the bilayer. Residues serine 414–lysine 431 lie on the Extracellular side of the membrane. Residues isoleucine 432–isoleucine 452 form a helical membrane-spanning segment. The Cytoplasmic segment spans residues serine 453–leucine 461.

Belongs to the Casparian strip membrane proteins (CASP) family. Homodimer and heterodimers.

It localises to the cell membrane. The sequence is that of CASP-like protein 4U1 from Sorghum bicolor (Sorghum).